A 186-amino-acid polypeptide reads, in one-letter code: PRA1 family protein G2 (186 aa).

The next 4 membrane-spanning stretches (helical) occupy residues 66–86, 87–107, 119–139, and 142–162; these read YFFV…LITA, SPVA…FHFF, VGDR…IWFT, and AVNL…HAVF.

This sequence belongs to the PRA1 family. Expressed in roots and trichomes.

It localises to the endoplasmic reticulum membrane. Functionally, may be involved in both secretory and endocytic intracellular trafficking in the endosomal/prevacuolar compartments. The chain is PRA1 family protein G2 (PRA1G2) from Arabidopsis thaliana (Mouse-ear cress).